Reading from the N-terminus, the 123-residue chain is Kininogen (123 aa).

Post-translationally, bradykinin is released from kininogen by kallikrein. N-glycosylated. Contains sulfated N-acetylglucosamine and O-acetylated sialic acids as terminal elements on biantennary and triantennary N-glycans.

Inhibits papain and ficin (cysteine proteinases) but not trypsin (a serine proteinase). The chain is Kininogen from Gadus morhua (Atlantic cod).